The following is a 133-amino-acid chain: uncharacterized protein (133 aa).

The disordered stretch occupies residues 82 to 133 (KIKSYSPSRSQKALNNPSKIRTKQTNNDTTIQQSNNTTSTNTKPSSNTNTQQ). Polar residues predominate over residues 86 to 100 (YSPSRSQKALNNPSK). A compositionally biased stretch (low complexity) spans 105–133 (QTNNDTTIQQSNNTTSTNTKPSSNTNTQQ).

This is an uncharacterized protein from Acidianus convivator (ABV).